The sequence spans 251 residues: Phosphate import ATP-binding protein PstB (251 aa).

The 242-residue stretch at 5-246 (IEIENFSAYY…PKNRLTEEYL (242 aa)) folds into the ABC transporter domain. Position 37–44 (37–44 (GPSGCGKT)) interacts with ATP.

Belongs to the ABC transporter superfamily. Phosphate importer (TC 3.A.1.7) family. As to quaternary structure, the complex is composed of two ATP-binding proteins (PstB), two transmembrane proteins (PstC and PstA) and a solute-binding protein (PstS).

It localises to the cell inner membrane. The enzyme catalyses phosphate(out) + ATP + H2O = ADP + 2 phosphate(in) + H(+). Functionally, part of the ABC transporter complex PstSACB involved in phosphate import. Responsible for energy coupling to the transport system. This Thermotoga maritima (strain ATCC 43589 / DSM 3109 / JCM 10099 / NBRC 100826 / MSB8) protein is Phosphate import ATP-binding protein PstB.